The following is a 132-amino-acid chain: Small ribosomal subunit protein uS11 (132 aa).

Belongs to the universal ribosomal protein uS11 family. Part of the 30S ribosomal subunit.

Functionally, located on the platform of the 30S subunit. This chain is Small ribosomal subunit protein uS11, found in Sulfurisphaera tokodaii (strain DSM 16993 / JCM 10545 / NBRC 100140 / 7) (Sulfolobus tokodaii).